A 350-amino-acid chain; its full sequence is Histidinol-phosphate aminotransferase 1 (350 aa).

Lys-209 is modified (N6-(pyridoxal phosphate)lysine).

Belongs to the class-II pyridoxal-phosphate-dependent aminotransferase family. Histidinol-phosphate aminotransferase subfamily. As to quaternary structure, homodimer. The cofactor is pyridoxal 5'-phosphate.

It carries out the reaction L-histidinol phosphate + 2-oxoglutarate = 3-(imidazol-4-yl)-2-oxopropyl phosphate + L-glutamate. It functions in the pathway amino-acid biosynthesis; L-histidine biosynthesis; L-histidine from 5-phospho-alpha-D-ribose 1-diphosphate: step 7/9. This is Histidinol-phosphate aminotransferase 1 (hisC1) from Bradyrhizobium diazoefficiens (strain JCM 10833 / BCRC 13528 / IAM 13628 / NBRC 14792 / USDA 110).